A 358-amino-acid chain; its full sequence is Isopentenyl-diphosphate delta-isomerase (358 aa).

Substrate is bound at residue arginine 12 to lysine 13. FMN contacts are provided by residues alanine 69–threonine 71, serine 99, and asparagine 128. Glutamine 158 is a substrate binding site. Glutamate 159 is a binding site for Mg(2+). FMN is bound by residues lysine 190, threonine 220, glycine 267–arginine 269, and alanine 288–glycine 289.

This sequence belongs to the IPP isomerase type 2 family. In terms of assembly, homooctamer. Dimer of tetramers. FMN serves as cofactor. The cofactor is NADPH. It depends on Mg(2+) as a cofactor.

The protein resides in the cytoplasm. The enzyme catalyses isopentenyl diphosphate = dimethylallyl diphosphate. In terms of biological role, involved in the biosynthesis of isoprenoids. Catalyzes the 1,3-allylic rearrangement of the homoallylic substrate isopentenyl (IPP) to its allylic isomer, dimethylallyl diphosphate (DMAPP). The polypeptide is Isopentenyl-diphosphate delta-isomerase (Listeria monocytogenes serovar 1/2a (strain ATCC BAA-679 / EGD-e)).